The following is a 531-amino-acid chain: Transactivator/viroplasmin protein (531 aa).

Disordered stretches follow at residues 80–101 (ASGK…TATG) and 505–531 (CKSE…SVLV). 2 stretches are compositionally biased toward polar residues: residues 91-100 (SATSPEQTAT) and 505-517 (CKSE…TSEE). A compositionally biased stretch (acidic residues) spans 518–531 (GLQESEDEDFSVLV).

It belongs to the caulimoviridae viroplasmin family.

It localises to the host cytoplasm. In terms of biological role, enhances the translation of downstream ORFs on polycistronic mRNAs. This is Transactivator/viroplasmin protein from Cestrum yellow leaf curling virus (CmYLCV).